Reading from the N-terminus, the 340-residue chain is Alcohol dehydrogenase patD (340 aa).

Cysteine 46 is a binding site for Zn(2+). Histidine 47 contributes to the NAD(+) binding site. Residues histidine 67, glutamate 68, cysteine 101, cysteine 104, cysteine 112, and cysteine 154 each contribute to the Zn(2+) site. Substrate is bound at residue histidine 67. Residues 178 to 183 (GLGGLG), 198 to 203 (VALSRD), lysine 206, 265 to 267 (LSI), 289 to 291 (PSG), and 297 to 299 (EDA) each bind NAD(+).

Belongs to the zinc-containing alcohol dehydrogenase family. Requires Zn(2+) as cofactor.

It is found in the cytoplasm. The protein localises to the cytosol. It carries out the reaction neopatulin + NADPH + H(+) = (E)-ascladiol + NADP(+). It participates in mycotoxin biosynthesis; patulin biosynthesis. Alcohol dehydrogenase; part of the gene cluster that mediates the biosynthesis of patulin, an acetate-derived tetraketide mycotoxin produced by several fungal species that shows antimicrobial properties against several bacteria. PatD catalyzes the conversion of neopatulin into E-ascladiol. The pathway begins with the synthesis of 6-methylsalicylic acid by the polyketide synthase (PKS) patK via condensation of acetate and malonate units. The 6-methylsalicylic acid decarboxylase patG then catalyzes the decarboxylation of 6-methylsalicylic acid to yield m-cresol (also known as 3-methylphenol). These first reactions occur in the cytosol. The intermediate m-cresol is then transported into the endoplasmic reticulum where the cytochrome P450 monooxygenase patH converts it to m-hydroxybenzyl alcohol, which is further converted to gentisyl alcohol by the cytochrome P450 monooxygenase patI. The oxidoreductases patJ and patO further convert gentisyl alcohol to isoepoxydon in the vacuole. PatN catalyzes then the transformation of isoepoxydon into phyllostine. The cluster protein patF is responsible for the conversion from phyllostine to neopatulin whereas the alcohol dehydrogenase patD converts neopatulin to E-ascladiol. The steps between isoepoxydon and E-ascladiol occur in the cytosol, and E-ascladiol is probably secreted to the extracellular space by one of the cluster-specific transporters patC or patM. Finally, the secreted patulin synthase patE catalyzes the conversion of E-ascladiol to patulin. This chain is Alcohol dehydrogenase patD, found in Penicillium expansum (Blue mold rot fungus).